Consider the following 333-residue polypeptide: Tetraacyldisaccharide 4'-kinase (333 aa).

Residue 60–67 (TVGGTGKT) participates in ATP binding.

Belongs to the LpxK family.

The catalysed reaction is a lipid A disaccharide + ATP = a lipid IVA + ADP + H(+). Its pathway is glycolipid biosynthesis; lipid IV(A) biosynthesis; lipid IV(A) from (3R)-3-hydroxytetradecanoyl-[acyl-carrier-protein] and UDP-N-acetyl-alpha-D-glucosamine: step 6/6. Its function is as follows. Transfers the gamma-phosphate of ATP to the 4'-position of a tetraacyldisaccharide 1-phosphate intermediate (termed DS-1-P) to form tetraacyldisaccharide 1,4'-bis-phosphate (lipid IVA). In Azotobacter vinelandii (strain DJ / ATCC BAA-1303), this protein is Tetraacyldisaccharide 4'-kinase.